Here is a 154-residue protein sequence, read N- to C-terminus: Small ribosomal subunit protein uS13m (154 aa).

The transit peptide at 1–30 directs the protein to the mitochondrion; sequence MLGLRRSATTLFDISQSLLRNVTFHGLRVQ. Positions 121-154 are disordered; it reads RHGLPCRGQRTSTNARTKKGKAVAIAGKKKAPRK. Over residues 136-154 the composition is skewed to basic residues; sequence RTKKGKAVAIAGKKKAPRK.

It belongs to the universal ribosomal protein uS13 family. In terms of assembly, part of the small ribosomal subunit.

The protein resides in the mitochondrion. Located at the top of the head of the small subunit, it contacts several helices of the 18S rRNA. The chain is Small ribosomal subunit protein uS13m (RPS13) from Arabidopsis thaliana (Mouse-ear cress).